Here is a 385-residue protein sequence, read N- to C-terminus: Ethanolamine kinase 2 (385 aa).

Belongs to the choline/ethanolamine kinase family.

The catalysed reaction is ethanolamine + ATP = phosphoethanolamine + ADP + H(+). It functions in the pathway phospholipid metabolism; phosphatidylethanolamine biosynthesis; phosphatidylethanolamine from ethanolamine: step 1/3. Functionally, highly specific for ethanolamine phosphorylation. Does not have choline kinase activity. This Rattus norvegicus (Rat) protein is Ethanolamine kinase 2 (Etnk2).